Consider the following 210-residue polypeptide: Large ribosomal subunit protein uL3 (210 aa).

Residues 139–165 (AEKVHRSPGSIGHATFPGKVFKGKKMP) form a disordered region.

The protein belongs to the universal ribosomal protein uL3 family. In terms of assembly, part of the 50S ribosomal subunit. Forms a cluster with proteins L14 and L19.

Its function is as follows. One of the primary rRNA binding proteins, it binds directly near the 3'-end of the 23S rRNA, where it nucleates assembly of the 50S subunit. The chain is Large ribosomal subunit protein uL3 from Maridesulfovibrio salexigens (strain ATCC 14822 / DSM 2638 / NCIMB 8403 / VKM B-1763) (Desulfovibrio salexigens).